The following is an 88-amino-acid chain: FXYD domain-containing ion transport regulator 4 (88 aa).

Residues 1-20 (MEEITCAFLLLLAGLPALEA) form the signal peptide. The Extracellular portion of the chain corresponds to 21-38 (SDPVDKDSPFYYDWESLQ). Residues 39-59 (LGGLIFGGLLCIAGIAMALSG) traverse the membrane as a helical segment. Residues 60–88 (KCKCRRTHKPSSLPGKATPLIIPGSANTC) are Cytoplasmic-facing.

The protein belongs to the FXYD family. Regulatory subunit of the sodium/potassium-transporting ATPase which is composed of a catalytic alpha subunit, a non-catalytic beta subunit and a regulatory subunit. The regulatory subunit, a member of the FXYD protein family, modulates the enzymatic activity in a tissue- and isoform-specific way by changing affinities of the Na+/K+-ATPase toward Na(+), K(+) or ATP.

The protein resides in the cell membrane. Its subcellular location is the basolateral cell membrane. Associates with and regulates the activity of the sodium/potassium-transporting ATPase (NKA) which catalyzes the hydrolysis of ATP coupled with the exchange of Na(+) and K(+) ions across the plasma membrane. Increases the apparent affinity of the transporter for Na(+) and increases NKA activity. In Mus musculus (Mouse), this protein is FXYD domain-containing ion transport regulator 4 (Fxyd4).